The chain runs to 185 residues: Bcl-2-like protein 10 (185 aa).

A BH1 motif is present at residues 76–95 (LSNDQEFNWGRLVMLLAFVG). The BH2 motif lies at 138 to 149 (WLEAHGGWDGFC). Residues 160 to 182 (FWRRLLIRAILSCFFATAIFYIW) form a helical membrane-spanning segment.

Belongs to the Bcl-2 family. As to quaternary structure, interacts with BAX. Interacts with BCL2, BCL2L1/BCLX. Interacts with APAF1. Interacts with ITPR1, ITPR2 and ITPR3; the interaction with ITPR1 is increased in the presence of AHCLY1. Interacts with AHCYL1. Interacts with HIP1R (via ENTH and I/LWEQ domains). Interacts with CASP9. Interacts with BCL2L11/BIM. Interacts with BIK. Interacts with UBQLN4. Interacts with NME2/NM23-H2. Interacts with and PMAIP1/NOXA. Interacts with TPX2. Interacts with UBQLN1; in the cytoplasm. Interacts (via BH1 domain) with BECN1. Ca(2+) is required as a cofactor. In terms of processing, monoubiquitinated by UBQLN1; results in stabilization of BCL2L10 protein abundance and in relocalization from mitochondria to cytoplasm. Expressed in oligodendroglial lineage cells.

Its subcellular location is the mitochondrion. The protein localises to the nucleus membrane. It localises to the endoplasmic reticulum. The protein resides in the cytoplasm. It is found in the cytoskeleton. Its subcellular location is the spindle. In terms of biological role, promotes cell survival by suppressing apoptosis induced by BAX but not BAK. Increases binding of AHCYL1/IRBIT to ITPR1. Reduces ITPR1-mediated calcium release from the endoplasmic reticulum cooperatively with AHCYL1/IRBIT under normal cellular conditions. Under apoptotic stress conditions, dissociates from ITPR1 and is displaced from mitochondria-associated endoplasmic reticulum membranes, leading to increased Ca(2+) transfer to mitochondria which promotes apoptosis. Required for the correct formation of the microtubule organizing center during oocyte cell division, potentially via regulation of protein abundance and localization of other microtubule organizing center components such as AURKA and TPX2. The polypeptide is Bcl-2-like protein 10 (Rattus norvegicus (Rat)).